We begin with the raw amino-acid sequence, 878 residues long: Aconitase htyD (878 aa).

Substrate-binding positions include Gln-173 and 290–292; that span reads DSH. 3 residues coordinate [4Fe-4S] cluster: Cys-472, Cys-535, and Cys-538. Substrate-binding residues include Arg-558 and Arg-563. A disordered region spans residues 626–671; sequence IAIANQRTKPAPTMPAYVEPYRSFQPPVPPSSDQPQSMKDHGKTSN. 742-743 lines the substrate pocket; that stretch reads SR.

It belongs to the aconitase/IPM isomerase family.

It participates in antifungal biosynthesis. Functionally, aconitase; part of the gene cluster that mediates the de novo generation of L-homotyrosine from acetyl-CoA and 4-hydroxyphenyl-pyruvate. L-homotyrosine is a building block of echinocandin B, a fungal lipidated cyclic hexapeptide that acts as an antifungal agent. L-homotyrosine 4-hydroxyphenyl-pyruvate first undergoes an aldol-type condensation by htyA with the C-2 of acetyl-CoA followed by the release of CoA to form 2-(4-hydroxybenzyl)-malate. This is followed by isomerization of 2-(4-hydroxy-benzyl)-malate to 3-(4-hydroxybenzyl)-malate by htyD. Thereafter, 3-(4-hydroxybenzyl)-malate undergoes decarboxylation and oxidation to form 2-oxo-4-(4-hydroxybenzyl)butanoic acid, coupled to reduction of NAD(+) to NADH by htyC. The product then undergoes transamination catalyzed by htyB to form L-homotyrosine. The polypeptide is Aconitase htyD (Aspergillus rugulosus (Emericella rugulosa)).